Here is a 362-residue protein sequence, read N- to C-terminus: Severin (362 aa).

The stretch at 53–102 (FKVVPVPESSYGKFYDGDSYIILHTFKEGNSLKHDIHFFLGTFTTQDEAG) is one Gelsolin-like 1 repeat. 162 to 170 (RLLHISGDK) provides a ligand contact to a 1,2-diacyl-sn-glycero-3-phospho-(1D-myo-inositol-4,5-bisphosphate). Gelsolin-like repeat units lie at residues 172 to 212 (AKVA…QEKN) and 280 to 323 (LKFS…NEKK).

The protein belongs to the villin/gelsolin family.

Severin blocks the ends of F-actin and causes the fragmentation and depolymerization of actin filaments in a Ca(2+) dependent manner. The polypeptide is Severin (sevA) (Dictyostelium discoideum (Social amoeba)).